The chain runs to 76 residues: Centromere protein W (76 aa).

This sequence belongs to the CENP-W/WIP1 family. In terms of assembly, heterodimer with CENPT; this dimer coassembles with CENPS-CENPX heterodimers at centromeres to form the tetrameric CENP-T-W-S-X complex, which is a subcomplex of the large constitutive centromere-associated network (CCAN, also known as the interphase centromere complex or ICEN). Interacts with NPM1.

It is found in the nucleus. Its subcellular location is the chromosome. The protein resides in the centromere. It localises to the kinetochore. Functionally, component of the CENPA-NAC (nucleosome-associated) complex, a complex that plays a central role in assembly of kinetochore proteins, mitotic progression and chromosome segregation. The CENPA-NAC complex recruits the CENPA-CAD (nucleosome distal) complex and may be involved in incorporation of newly synthesized CENPA into centromeres. Part of a nucleosome-associated complex that binds specifically to histone H3-containing nucleosomes at the centromere, as opposed to nucleosomes containing CENPA. Component of the heterotetrameric CENP-T-W-S-X complex that binds and supercoils DNA, and plays an important role in kinetochore assembly. CENPW has a fundamental role in kinetochore assembly and function. It is one of the inner kinetochore proteins, with most further proteins binding downstream. Required for normal chromosome organization and normal progress through mitosis. This is Centromere protein W (CENPW) from Gallus gallus (Chicken).